A 108-amino-acid chain; its full sequence is Type III secretion system chaperone SseA (108 aa).

The stretch at 69 to 97 (NQEAEKDLKKIVSLFKQLEVRLKQLNAQA) forms a coiled coil.

In terms of assembly, binds to SseB and SseD.

It is found in the cytoplasm. Functionally, functions as a type III secretion system (T3SS) chaperone, which is required for SseB and SseD accumulation and secretion. May have a direct role in secretion of SseB and SseD, or may facilitate their correct folding, for efficient secretion and function. Required for survival and replication within epithelial cells and macrophages. The polypeptide is Type III secretion system chaperone SseA (sseA) (Salmonella typhimurium (strain LT2 / SGSC1412 / ATCC 700720)).